A 796-amino-acid polypeptide reads, in one-letter code: U-box domain-containing protein 51 (796 aa).

3 disordered regions span residues 163-195 (DMDT…SSHQ), 218-240 (TNIG…SLDV), and 270-292 (RSSQ…SSSQ). Positions 171–181 (ADDRSESRFSS) are enriched in basic and acidic residues. Residues 182–195 (DSHSGTVSSTSSHQ) show a composition bias toward low complexity. Positions 270 to 291 (RSSQMEEASSSSTYSDPTSSSS) are enriched in low complexity. Positions 298-407 (ELEKLKIELR…QRLEDALEGG (110 aa)) form a coiled coil. A Protein kinase domain is found at 429–700 (FSDELKIGVG…DLGKEILPVL (272 aa)). ATP is bound by residues 435–443 (IGVGGYGSV) and Lys456. Asp557 serves as the catalytic Proton acceptor. The U-box domain occupies 724–796 (NAPTHFYCPI…IKEWRSQLIK (73 aa)).

This sequence belongs to the protein kinase superfamily. Ser/Thr protein kinase family.

It catalyses the reaction L-seryl-[protein] + ATP = O-phospho-L-seryl-[protein] + ADP + H(+). The enzyme catalyses L-threonyl-[protein] + ATP = O-phospho-L-threonyl-[protein] + ADP + H(+). It carries out the reaction S-ubiquitinyl-[E2 ubiquitin-conjugating enzyme]-L-cysteine + [acceptor protein]-L-lysine = [E2 ubiquitin-conjugating enzyme]-L-cysteine + N(6)-ubiquitinyl-[acceptor protein]-L-lysine.. Its pathway is protein modification; protein ubiquitination. Functionally, functions as an E3 ubiquitin ligase. This chain is U-box domain-containing protein 51 (PUB51), found in Arabidopsis thaliana (Mouse-ear cress).